The primary structure comprises 239 residues: 2-C-methyl-D-erythritol 4-phosphate cytidylyltransferase (239 aa).

It belongs to the IspD/TarI cytidylyltransferase family. IspD subfamily.

It catalyses the reaction 2-C-methyl-D-erythritol 4-phosphate + CTP + H(+) = 4-CDP-2-C-methyl-D-erythritol + diphosphate. Its pathway is isoprenoid biosynthesis; isopentenyl diphosphate biosynthesis via DXP pathway; isopentenyl diphosphate from 1-deoxy-D-xylulose 5-phosphate: step 2/6. Its function is as follows. Catalyzes the formation of 4-diphosphocytidyl-2-C-methyl-D-erythritol from CTP and 2-C-methyl-D-erythritol 4-phosphate (MEP). The protein is 2-C-methyl-D-erythritol 4-phosphate cytidylyltransferase of Ruthia magnifica subsp. Calyptogena magnifica.